Consider the following 959-residue polypeptide: AP2-associated protein kinase 1 (959 aa).

Met-1 carries the N-acetylmethionine modification. Residues 1–11 are compositionally biased toward basic and acidic residues; sequence MKKFFDSRREQ. Residues 1–27 form a disordered region; the sequence is MKKFFDSRREQGSSGLGSGSSGGGGSS. Ser-14 is subject to Phosphoserine. The segment covering 14 to 27 has biased composition (gly residues); the sequence is SGLGSGSSGGGGSS. Positions 46-315 constitute a Protein kinase domain; that stretch reads VTVDEVLAEG…QVSYFSFKLL (270 aa). ATP-binding positions include 52-60 and Lys-74; that span reads LAEGGFALV. Asp-176 functions as the Proton acceptor in the catalytic mechanism. Tyr-234 carries the post-translational modification Phosphotyrosine. Ser-235 bears the Phosphoserine mark. Positions 340–385 are disordered; that stretch reads SEAAVKKTQPKARLTDPIPTTETSIAPRQRPKAGQTQPNPGILPIQ. Residues Thr-354 and Thr-389 each carry the phosphothreonine modification. An Omega-N-methylarginine modification is found at Arg-391. Disordered stretches follow at residues 398–514 and 578–630; these read PLPQ…AVHP and TAPQ…RAGH. The span at 404–419 shows a compositional bias: polar residues; sequence GPSNQPGLLPSVSQPK. The span at 420–435 shows a compositional bias: low complexity; the sequence is AQATPSQPLQSSQPKQ. Thr-441 carries the post-translational modification Phosphothreonine. Composition is skewed to low complexity over residues 444–481, 494–510, and 578–603; these read QTPA…QPQQ, QQQQ…QQFQ, and TAPQ…KVQT. The residue at position 604 (Thr-604) is a Phosphothreonine. Positions 609–625 are enriched in polar residues; it reads IQGQKVGSLTPPSSPKT. Ser-616 carries the post-translational modification Phosphoserine. Thr-618 carries the phosphothreonine modification. Residues Ser-621, Ser-622, Ser-635, and Ser-648 each carry the phosphoserine modification. The residue at position 651 (Thr-651) is a Phosphothreonine. Disordered stretches follow at residues 662–699, 727–763, 837–857, and 923–943; these read SLNK…FDDD, GGSA…GGQA, PVAQ…TDSL, and ITKN…ESSL. Residues 670–694 are compositionally biased toward polar residues; that stretch reads TTTPSGSPRTSQQNVSNASEGSTWN. Ser-729 bears the Phosphoserine mark. Polar residues-rich tracts occupy residues 738-752 and 842-857; these read QPTQ…SFSA and LPSQ…TDSL. A clathrin-binding domain (CBD) region spans residues 821-958; it reads DKADVAVESL…SLLLVDQLID (138 aa). Phosphoserine is present on residues Ser-844, Ser-935, and Ser-936. Residues 929–942 are compositionally biased toward low complexity; sequence GGHSRNSSGSSESS.

This sequence belongs to the protein kinase superfamily. Ser/Thr protein kinase family. As to quaternary structure, interacts (via CBD domain) with clathrin. Interacts with AP-2 complex. Interacts with NUMB. Interacts with alpha-adaptin. Interacts with EPS15 isoform 2. Interacts with membrane-bound activated NOTCH1 but not with the inactive full-length form of NOTCH1. Preferentially interacts with monoubiquitinated activated NOTCH1 compared to the non-ubiquitinated form. Post-translationally, autophosphorylated.

It localises to the cell membrane. It is found in the membrane. The protein resides in the clathrin-coated pit. The protein localises to the presynapse. The catalysed reaction is L-seryl-[protein] + ATP = O-phospho-L-seryl-[protein] + ADP + H(+). It carries out the reaction L-threonyl-[protein] + ATP = O-phospho-L-threonyl-[protein] + ADP + H(+). Stimulated by clathrin. Regulates clathrin-mediated endocytosis by phosphorylating the AP2M1/mu2 subunit of the adaptor protein complex 2 (AP-2) which ensures high affinity binding of AP-2 to cargo membrane proteins during the initial stages of endocytosis. Preferentially, may phosphorylate substrates on threonine residues. Regulates phosphorylation of other AP-2 subunits as well as AP-2 localization and AP-2-mediated internalization of ligand complexes. Phosphorylates NUMB and regulates its cellular localization, promoting NUMB localization to endosomes. Binds to and stabilizes the activated form of NOTCH1, increases its localization in endosomes and regulates its transcriptional activity. The polypeptide is AP2-associated protein kinase 1 (Aak1) (Mus musculus (Mouse)).